The chain runs to 561 residues: Magnesium-chelatase 60 kDa subunit (561 aa).

Disordered stretches follow at residues proline 234–aspartate 268 and arginine 298–glycine 324. The span at glutamate 237–proline 249 shows a compositional bias: pro residues. Residues glutamate 250–aspartate 265 show a composition bias toward acidic residues. Basic residues predominate over residues arginine 314 to lysine 323. One can recognise a VWFA domain in the interval valine 379–leucine 559.

It belongs to the Mg-chelatase subunits D/I family.

It catalyses the reaction protoporphyrin IX + Mg(2+) + ATP + H2O = Mg-protoporphyrin IX + ADP + phosphate + 3 H(+). It participates in porphyrin-containing compound metabolism; bacteriochlorophyll biosynthesis. In terms of biological role, involved in bacteriochlorophyll biosynthesis; introduces a magnesium ion into protoporphyrin IX to yield Mg-protoporphyrin IX. The chain is Magnesium-chelatase 60 kDa subunit (bchD) from Rhodobacter capsulatus (strain ATCC BAA-309 / NBRC 16581 / SB1003).